A 562-amino-acid chain; its full sequence is Undecaprenyl phosphate-alpha-4-amino-4-deoxy-L-arabinose arabinosyl transferase (562 aa).

The next 12 helical transmembrane spans lie at 14 to 34 (IKFS…PLNY), 91 to 111 (FSVR…IYLF), 120 to 140 (ILSL…IIGT), 142 to 162 (SVLD…FWLA), 186 to 206 (FITK…IWLF), 215 to 235 (TIIH…PWIY), 267 to 287 (PFWY…GFLF), 302 to 322 (IEFY…ISKG), 324 to 344 (LPTY…KNIE), 354 to 374 (LLKI…IFII), 395 to 415 (LILC…IIFN), and 425 to 445 (LSII…IIYA).

It belongs to the glycosyltransferase 83 family.

Its subcellular location is the cell inner membrane. It catalyses the reaction 4-amino-4-deoxy-alpha-L-arabinopyranosyl di-trans,octa-cis-undecaprenyl phosphate + lipid IVA = lipid IIA + di-trans,octa-cis-undecaprenyl phosphate.. It participates in lipopolysaccharide metabolism; 4-amino-4-deoxy-beta-L-arabinose-lipid A biosynthesis. Its function is as follows. Catalyzes the transfer of the L-Ara4N moiety of the glycolipid undecaprenyl phosphate-alpha-L-Ara4N to lipid A. The modified arabinose is attached to lipid A and is required for resistance to polymyxin and cationic antimicrobial peptides. In Wigglesworthia glossinidia brevipalpis, this protein is Undecaprenyl phosphate-alpha-4-amino-4-deoxy-L-arabinose arabinosyl transferase.